We begin with the raw amino-acid sequence, 196 residues long: dCTP deaminase, dUMP-forming (196 aa).

DCTP is bound by residues 101–106 (KSSLGR), Asp-119, 127–129 (TLE), Gln-148, Tyr-162, and Gln-174. Glu-129 functions as the Proton donor/acceptor in the catalytic mechanism.

It belongs to the dCTP deaminase family. In terms of assembly, homotrimer.

The catalysed reaction is dCTP + 2 H2O = dUMP + NH4(+) + diphosphate. Its pathway is pyrimidine metabolism; dUMP biosynthesis; dUMP from dCTP: step 1/1. Its function is as follows. Bifunctional enzyme that catalyzes both the deamination of dCTP to dUTP and the hydrolysis of dUTP to dUMP without releasing the toxic dUTP intermediate. The sequence is that of dCTP deaminase, dUMP-forming from Thermobifida fusca (strain YX).